Reading from the N-terminus, the 526-residue chain is Neutrophil cytosol factor 2 (526 aa).

TPR repeat units follow at residues 37-70 (SRIC…DKHL), 71-104 (AVAY…LRGN), and 121-154 (CEVL…KSEP). T233 is subject to Phosphothreonine. Residues 240–299 (LEGEAHRVLFGFVPETKEELQVMPGNIVFVLKKGNDNWATVMFNGQKGLVPCNYLEPVEL) form the SH3 1 domain. The span at 303–315 (PQQQPQEESSPQS) shows a compositional bias: low complexity. Positions 303–346 (PQQQPQEESSPQSDIPAPPSSKAPGRPQLSPGQKQKEEPKEVKL) are disordered. Basic and acidic residues predominate over residues 336–345 (KQKEEPKEVK). The PB1 domain occupies 351-429 (PYTLKVHYKY…YCLTLWCENT (79 aa)). S399 bears the Phosphoserine mark. The tract at residues 433 to 458 (QGFPDEPKESEKADANNQTTEPQLKK) is disordered. Residues 437–446 (DEPKESEKAD) show a composition bias toward basic and acidic residues. In terms of domain architecture, SH3 2 spans 457 to 516 (KKGSQVEALFSYEATQPEDLEFQEGDIILVLSKVNEEWLEGECKGKVGIFPKVFVEDCAT).

It belongs to the NCF2/NOXA1 family. Component of the phagocyte NADPH oxidase complex composed of an obligatory core heterodimer formed by the membrane proteins CYBA and CYBB and the cytosolic regulatory subunits NCF1/p47-phox, NCF2/p67-phox, NCF4/p40-phox and the small GTPase RAC1 or RAC2. Part of a cytosolic complex composed at least by NCF1, NCF2 and NCF4. Interacts with NCF4. Interacts (via the C-terminal SH3 domain) with NCF1 (via C-terminus). Interacts with SYTL1 and RAC1. May interact with NOXO1. Interacts with S100A8 and calprotectin (S100A8/9). Interacts with GBP7 (via GB1/RHD3-type G domain). Interacts with CYBB; the interaction is enhanced in the presence of GBP7.

It localises to the cytoplasm. Subunit of the phagocyte NADPH oxidase complex that mediates the transfer of electrons from cytosolic NADPH to O2 to produce the superoxide anion (O2(-)). In the activated complex, electrons are first transferred from NADPH to flavin adenine dinucleotide (FAD) and subsequently transferred via two heme molecules to molecular oxygen, producing superoxide through an outer-sphere reaction. Activation of the NADPH oxidase complex is initiated by the assembly of cytosolic subunits of the NADPH oxidase complex with the core NADPH oxidase complex to form a complex at the plasma membrane or phagosomal membrane. This activation process is initiated by phosphorylation dependent binding of the cytosolic NCF1/p47-phox subunit to the C-terminus of CYBA/p22-phox. In Homo sapiens (Human), this protein is Neutrophil cytosol factor 2.